The following is a 194-amino-acid chain: SRP-independent targeting protein 3 homolog (194 aa).

Helical transmembrane passes span 43 to 63 (ILYA…KIII) and 110 to 130 (LVTI…PPLL).

The protein belongs to the PHO88 family.

Its subcellular location is the endoplasmic reticulum membrane. In terms of biological role, may function in a SRP (signal recognition particle) and GET (guided entry of tail-anchored proteins) independent pathway for targeting a broad range of substrate proteins to the endoplasmic reticulum. Involved in inorganic phosphate uptake. Also involved in telomere length regulation and maintenance. This chain is SRP-independent targeting protein 3 homolog, found in Schizosaccharomyces pombe (strain 972 / ATCC 24843) (Fission yeast).